The following is a 166-amino-acid chain: Large ribosomal subunit protein uL11 (166 aa).

It belongs to the universal ribosomal protein uL11 family. As to quaternary structure, part of the ribosomal stalk of the 50S ribosomal subunit. Interacts with L10 and the large rRNA to form the base of the stalk. L10 forms an elongated spine to which L12 dimers bind in a sequential fashion forming a multimeric L10(L12)X complex.

Its function is as follows. Forms part of the ribosomal stalk which helps the ribosome interact with GTP-bound translation factors. The chain is Large ribosomal subunit protein uL11 from Methanopyrus kandleri (strain AV19 / DSM 6324 / JCM 9639 / NBRC 100938).